A 353-amino-acid polypeptide reads, in one-letter code: Quinolinate synthase (353 aa).

The iminosuccinate site is built by histidine 47 and serine 68. [4Fe-4S] cluster is bound at residue cysteine 113. Residues 139 to 141 (YAN) and serine 156 contribute to the iminosuccinate site. [4Fe-4S] cluster is bound at residue cysteine 200. Iminosuccinate-binding positions include 226–228 (HPE) and threonine 243. Residue cysteine 297 participates in [4Fe-4S] cluster binding.

This sequence belongs to the quinolinate synthase family. Type 1 subfamily. [4Fe-4S] cluster is required as a cofactor.

It localises to the cytoplasm. The enzyme catalyses iminosuccinate + dihydroxyacetone phosphate = quinolinate + phosphate + 2 H2O + H(+). It participates in cofactor biosynthesis; NAD(+) biosynthesis; quinolinate from iminoaspartate: step 1/1. Its function is as follows. Catalyzes the condensation of iminoaspartate with dihydroxyacetone phosphate to form quinolinate. The chain is Quinolinate synthase from Erwinia tasmaniensis (strain DSM 17950 / CFBP 7177 / CIP 109463 / NCPPB 4357 / Et1/99).